A 162-amino-acid polypeptide reads, in one-letter code: Ribosome maturation factor RimP (162 aa).

Belongs to the RimP family.

Its subcellular location is the cytoplasm. Required for maturation of 30S ribosomal subunits. The polypeptide is Ribosome maturation factor RimP (Cupriavidus necator (strain ATCC 17699 / DSM 428 / KCTC 22496 / NCIMB 10442 / H16 / Stanier 337) (Ralstonia eutropha)).